The following is a 112-amino-acid chain: Nitrogen regulatory protein GlnK2 (112 aa).

ADP contacts are provided by residues Thr29, 37–39, Val64, and 87–90; these read GVQ and GDGK. ATP-binding positions include Thr29, 37–39, Val64, and 87–90; these read GVQ and GDGK.

It belongs to the P(II) protein family. As to quaternary structure, homotrimer. Interacts and forms a complex with Amt2.

The protein resides in the cytoplasm. Involved in the regulation of nitrogen metabolism. Regulates the activity of its targets by protein-protein interaction in response to the nitrogen status of the cell. Regulates the activity of the ammonia channel Amt2 via direct interaction. The polypeptide is Nitrogen regulatory protein GlnK2 (Methanocaldococcus jannaschii (strain ATCC 43067 / DSM 2661 / JAL-1 / JCM 10045 / NBRC 100440) (Methanococcus jannaschii)).